The following is a 192-amino-acid chain: Hydrogenase expression/formation protein HupD (192 aa).

Residues Glu23, Asp69, and His100 each coordinate Ni(2+).

It belongs to the peptidase A31 family.

Its function is as follows. Not known. Could be involved in the processing of hydrogenase. The chain is Hydrogenase expression/formation protein HupD (hupD) from Bradyrhizobium diazoefficiens (strain JCM 10833 / BCRC 13528 / IAM 13628 / NBRC 14792 / USDA 110).